A 141-amino-acid polypeptide reads, in one-letter code: Large ribosomal subunit protein uL14 (141 aa).

Belongs to the universal ribosomal protein uL14 family. As to quaternary structure, part of the 50S ribosomal subunit. Forms a cluster with proteins L3 and L24e, part of which may contact the 16S rRNA in 2 intersubunit bridges.

In terms of biological role, binds to 23S rRNA. Forms part of two intersubunit bridges in the 70S ribosome. The chain is Large ribosomal subunit protein uL14 from Pyrococcus furiosus (strain ATCC 43587 / DSM 3638 / JCM 8422 / Vc1).